We begin with the raw amino-acid sequence, 341 residues long: L-threonine 3-dehydrogenase (341 aa).

Position 38 (Cys38) interacts with Zn(2+). Active-site charge relay system residues include Thr40 and His43. His63, Glu64, Cys93, Cys96, Cys99, and Cys107 together coordinate Zn(2+). NAD(+) contacts are provided by residues Ile175, Asp195, Arg200, 262–264 (LGI), and 286–287 (IY).

The protein belongs to the zinc-containing alcohol dehydrogenase family. Homotetramer. Zn(2+) serves as cofactor.

Its subcellular location is the cytoplasm. It catalyses the reaction L-threonine + NAD(+) = (2S)-2-amino-3-oxobutanoate + NADH + H(+). Its pathway is amino-acid degradation; L-threonine degradation via oxydo-reductase pathway; glycine from L-threonine: step 1/2. Its function is as follows. Catalyzes the NAD(+)-dependent oxidation of L-threonine to 2-amino-3-ketobutyrate. This Photorhabdus laumondii subsp. laumondii (strain DSM 15139 / CIP 105565 / TT01) (Photorhabdus luminescens subsp. laumondii) protein is L-threonine 3-dehydrogenase.